The primary structure comprises 70 residues: MPEDRKAAAKVEPLRKTRPCPECGKPSNREHYPFCSNRCREVDLSRWLTGSYAIPVAEDETKADYPDEEN.

The Zn(2+) site is built by Cys-20, Cys-23, Cys-35, and Cys-39.

It belongs to the DNA gyrase inhibitor YacG family. As to quaternary structure, interacts with GyrB. The cofactor is Zn(2+).

Its function is as follows. Inhibits all the catalytic activities of DNA gyrase by preventing its interaction with DNA. Acts by binding directly to the C-terminal domain of GyrB, which probably disrupts DNA binding by the gyrase. This is DNA gyrase inhibitor YacG from Rhizobium etli (strain CIAT 652).